The chain runs to 760 residues: Heat shock transcription factor (760 aa).

2 disordered regions span residues 1 to 132 (MIMN…PPVV) and 206 to 276 (FHPL…GPKT). Composition is skewed to polar residues over residues 19-31 (TESN…SSPS) and 38-88 (RSGT…SNKL). Residues 119–130 (DYKDSIDLDKPP) are compositionally biased toward basic and acidic residues. Low complexity predominate over residues 221–247 (AGPANNSQQQQQQQQQDSSIPSDGISS). A DNA-binding region spans residues 276–385 (TRPAFVMKIW…EDLLDKIVRN (110 aa)). Residues 414–467 (ELETIKMNQYVISEDLRRVRQDNKMLWQENYLNRERNQVQGRTLDKILKFLSVV) are involved in trimerization. Disordered stretches follow at residues 492 to 545 (TQYR…NNNN), 560 to 582 (LTNR…EGSI), 609 to 630 (HQPG…SAPS), and 674 to 760 (QEQH…VSDH). The segment covering 515-539 (NSRFARDNNQTAQPTYESPLSTSDT) has biased composition (polar residues). Ser570 bears the Phosphoserine mark. Position 574 is a phosphothreonine (Thr574). Position 576 is a phosphoserine (Ser576). Thr577 carries the post-translational modification Phosphothreonine. Positions 613–628 (ATTNNNNHSSSTAISA) are enriched in low complexity. The stretch at 646-684 (RNLDDLEKHINKEGQSIQQVQDWIDKLAQEQHEKQQQQQ) forms a coiled coil. 2 stretches are compositionally biased toward polar residues: residues 701–722 (ATTT…NISF) and 731–742 (PGSNVSSNINDS). The span at 744 to 760 (GNEKKSKKRSIEEVSDH) shows a compositional bias: basic and acidic residues.

The protein belongs to the HSF family. Homotrimer. Homotrimerization increases the affinity of HSF1 to DNA. Interacts with HSP90. Activated by phosphorylation of at least Ser-570, Thr-574, Ser-576 and Thr-577 in response to heat shock. Additional unidentified residues are also phosphorylated in response to heat shock.

The protein localises to the nucleus. In terms of biological role, DNA-binding transcription factor that specifically binds heat shock promoter elements (HSE) and activates transcription. With HSP90, is required for the modulation of the chaperone levels in response to growth temperature, rather than the activation of acute responses to sudden thermal transitions. Activated during infection and contributes to full virulence. The polypeptide is Heat shock transcription factor (Candida albicans (strain SC5314 / ATCC MYA-2876) (Yeast)).